A 410-amino-acid chain; its full sequence is Multifunctional CCA protein (410 aa).

G8 and R11 together coordinate ATP. Residues G8 and R11 each contribute to the CTP site. Positions 21 and 23 each coordinate Mg(2+). ATP-binding residues include R91, R138, and R141. Residues R91, R138, and R141 each coordinate CTP. The 119-residue stretch at T229–D347 folds into the HD domain.

The protein belongs to the tRNA nucleotidyltransferase/poly(A) polymerase family. Bacterial CCA-adding enzyme type 1 subfamily. As to quaternary structure, monomer. Can also form homodimers and oligomers. Mg(2+) serves as cofactor. It depends on Ni(2+) as a cofactor.

It catalyses the reaction a tRNA precursor + 2 CTP + ATP = a tRNA with a 3' CCA end + 3 diphosphate. The enzyme catalyses a tRNA with a 3' CCA end + 2 CTP + ATP = a tRNA with a 3' CCACCA end + 3 diphosphate. Functionally, catalyzes the addition and repair of the essential 3'-terminal CCA sequence in tRNAs without using a nucleic acid template. Adds these three nucleotides in the order of C, C, and A to the tRNA nucleotide-73, using CTP and ATP as substrates and producing inorganic pyrophosphate. tRNA 3'-terminal CCA addition is required both for tRNA processing and repair. Also involved in tRNA surveillance by mediating tandem CCA addition to generate a CCACCA at the 3' terminus of unstable tRNAs. While stable tRNAs receive only 3'-terminal CCA, unstable tRNAs are marked with CCACCA and rapidly degraded. This Xanthomonas campestris pv. campestris (strain B100) protein is Multifunctional CCA protein.